We begin with the raw amino-acid sequence, 20 residues long: Blooming-related protein 2 (20 aa).

Positions 1–20 are disordered; that stretch reads VSAEYLERQGPKDDXDCFDD.

Possible 'checkpoint' protein for cell division in the blooming process. The protein is Blooming-related protein 2 of Prorocentrum triestinum (Red tide alga).